The chain runs to 357 residues: Probable xyloglucan endotransglucosylase/hydrolase protein 29 (357 aa).

Positions 1–31 (MRDSIYLLWIDNRLVVIIMMVMMVSCRCVLG) are cleaved as a signal peptide. The GH16 domain occupies 32–232 (LENINPIFFD…YTFSPFVSEF (201 aa)). E117 functions as the Nucleophile in the catalytic mechanism. Catalysis depends on E121, which acts as the Proton donor. Residues E121 and 134–136 (QTN) each bind xyloglucan. A glycan (N-linked (GlcNAc...) asparagine) is linked at N140. Residues 144-148 (NRGRE), 211-212 (SW), and G216 each bind xyloglucan. 2 N-linked (GlcNAc...) asparagine glycosylation sites follow: N241 and N262. A disulfide bond links C299 and C312. R304 is a xyloglucan binding site. A disordered region spans residues 326–357 (GRLKFGGSHPKVHKARKKRRRNRSTPVVSADL). A compositionally biased stretch (basic residues) spans 335-348 (PKVHKARKKRRRNR). N-linked (GlcNAc...) asparagine glycosylation is present at N347.

The protein belongs to the glycosyl hydrolase 16 family. XTH group 3 subfamily. In terms of processing, contains at least one intrachain disulfide bond essential for its enzymatic activity.

Its subcellular location is the secreted. The protein resides in the cell wall. It is found in the extracellular space. The protein localises to the apoplast. The enzyme catalyses breaks a beta-(1-&gt;4) bond in the backbone of a xyloglucan and transfers the xyloglucanyl segment on to O-4 of the non-reducing terminal glucose residue of an acceptor, which can be a xyloglucan or an oligosaccharide of xyloglucan.. Its function is as follows. Catalyzes xyloglucan endohydrolysis (XEH) and/or endotransglycosylation (XET). Cleaves and religates xyloglucan polymers, an essential constituent of the primary cell wall, and thereby participates in cell wall construction of growing tissues. In Arabidopsis thaliana (Mouse-ear cress), this protein is Probable xyloglucan endotransglucosylase/hydrolase protein 29 (XTH29).